Here is a 976-residue protein sequence, read N- to C-terminus: Alpha-amylase (976 aa).

The first 33 residues, 1–33 (MKRGKLWGRLVSAAGLSLSIFLSSIGNVSTAYA), serve as a signal peptide directing secretion. The interval 45-98 (TKENTESATDASSNEASDAEADNDTDEAITDASSKELSAENDGASESDSSFDEY) is disordered. Low complexity predominate over residues 50 to 60 (ESATDASSNEA). 2 stretches are compositionally biased toward acidic residues: residues 61 to 73 (SDAEADNDTDEAI) and 87 to 96 (GASESDSSFD). Ca(2+) contacts are provided by N243, T284, and D293. D323 functions as the Nucleophile in the catalytic mechanism. A Ca(2+)-binding site is contributed by H327. E375 acts as the Proton donor in catalysis.

It belongs to the glycosyl hydrolase 13 family. As to quaternary structure, monomer. The cofactor is Ca(2+).

It catalyses the reaction Endohydrolysis of (1-&gt;4)-alpha-D-glucosidic linkages in polysaccharides containing three or more (1-&gt;4)-alpha-linked D-glucose units.. The protein is Alpha-amylase (amyA) of Butyrivibrio fibrisolvens.